Here is a 374-residue protein sequence, read N- to C-terminus: Ribosomal RNA large subunit methyltransferase G (374 aa).

It belongs to the methyltransferase superfamily. RlmG family.

Its subcellular location is the cytoplasm. The catalysed reaction is guanosine(1835) in 23S rRNA + S-adenosyl-L-methionine = N(2)-methylguanosine(1835) in 23S rRNA + S-adenosyl-L-homocysteine + H(+). Functionally, specifically methylates the guanine in position 1835 (m2G1835) of 23S rRNA. This chain is Ribosomal RNA large subunit methyltransferase G, found in Pseudomonas putida (strain ATCC 47054 / DSM 6125 / CFBP 8728 / NCIMB 11950 / KT2440).